A 306-amino-acid chain; its full sequence is UDP-3-O-acyl-N-acetylglucosamine deacetylase (306 aa).

Zn(2+)-binding residues include H79, H238, and D242. The active-site Proton donor is H265.

It belongs to the LpxC family. It depends on Zn(2+) as a cofactor.

It catalyses the reaction a UDP-3-O-[(3R)-3-hydroxyacyl]-N-acetyl-alpha-D-glucosamine + H2O = a UDP-3-O-[(3R)-3-hydroxyacyl]-alpha-D-glucosamine + acetate. It participates in glycolipid biosynthesis; lipid IV(A) biosynthesis; lipid IV(A) from (3R)-3-hydroxytetradecanoyl-[acyl-carrier-protein] and UDP-N-acetyl-alpha-D-glucosamine: step 2/6. Its function is as follows. Catalyzes the hydrolysis of UDP-3-O-myristoyl-N-acetylglucosamine to form UDP-3-O-myristoylglucosamine and acetate, the committed step in lipid A biosynthesis. This chain is UDP-3-O-acyl-N-acetylglucosamine deacetylase, found in Shewanella sp. (strain W3-18-1).